A 196-amino-acid polypeptide reads, in one-letter code: ECF RNA polymerase sigma factor SigM (196 aa).

Residues 39 to 105 (LFRRHHRQLH…ACLDRLRRAK (67 aa)) form a sigma-70 factor domain-2 region. The short motif at 63 to 66 (DALQ) is the Polymerase core binding element. The tract at residues 130 to 181 (AVQRALMRLPVEQRAAVVAVDMQGYSIADTARMLGVAEGTVKSRCARARARL) is sigma-70 factor domain-4. The segment at residues 156 to 175 (IADTARMLGVAEGTVKSRCA) is a DNA-binding region (H-T-H motif).

This sequence belongs to the sigma-70 factor family. ECF subfamily. In terms of assembly, interacts transiently with the RNA polymerase catalytic core formed by RpoA, RpoB, RpoC and RpoZ (2 alpha, 1 beta, 1 beta' and 1 omega subunit) to form the RNA polymerase holoenzyme that can initiate transcription. Interacts (via sigma-70 factor domain-4) with anti-sigma-M factor RsmA (AC L7N5D7).

In terms of biological role, sigma factors are initiation factors that promote the attachment of RNA polymerase to specific initiation sites and are then released. Extracytoplasmic function (ECF) sigma factors are held in an inactive form by an anti-sigma factor (RsaM, AC L7N5D7) until released by regulated intramembrane proteolysis. This sigma factor is required for the synthesis of surface or secreted molecules. In Mycobacterium tuberculosis (strain ATCC 25618 / H37Rv), this protein is ECF RNA polymerase sigma factor SigM (sigM).